The primary structure comprises 299 residues: Taste receptor type 2 member 45 (299 aa).

Position 1 (methionine 1) is a topological domain, extracellular. Residues isoleucine 2 to phenylalanine 22 form a helical membrane-spanning segment. Residues alanine 23–arginine 55 lie on the Cytoplasmic side of the membrane. The helical transmembrane segment at valine 56 to cysteine 76 threads the bilayer. The Extracellular portion of the chain corresponds to serine 77–proline 98. The helical transmembrane segment at alanine 99–leucine 119 threads the bilayer. Residues arginine 120–lysine 126 lie on the Cytoplasmic side of the membrane. The chain crosses the membrane as a helical span at residues serine 127–valine 147. Topologically, residues asparagine 148 to threonine 178 are extracellular. Asparagine 161 carries an N-linked (GlcNAc...) asparagine glycan. Residues valine 179–valine 199 form a helical membrane-spanning segment. The Cytoplasmic segment spans residues cysteine 200–glutamine 229. The helical transmembrane segment at threonine 230–tryptophan 250 threads the bilayer. At serine 251–proline 259 the chain is on the extracellular side. Residues valine 260–isoleucine 280 form a helical membrane-spanning segment. Over tryptophan 281–tyrosine 299 the chain is Cytoplasmic.

Belongs to the G-protein coupled receptor T2R family. Expressed in subsets of taste receptor cells of the tongue and exclusively in gustducin-positive cells.

Its subcellular location is the membrane. In terms of biological role, receptor that may play a role in the perception of bitterness and is gustducin-linked. May play a role in sensing the chemical composition of the gastrointestinal content. The activity of this receptor may stimulate alpha gustducin, mediate PLC-beta-2 activation and lead to the gating of TRPM5. The polypeptide is Taste receptor type 2 member 45 (TAS2R45) (Homo sapiens (Human)).